A 638-amino-acid polypeptide reads, in one-letter code: Threonine--tRNA ligase (638 aa).

The TGS domain occupies 1–61 (MPIITLPDGT…DYDAEIKIIT (61 aa)). The interval 242–533 (DHRKIGKKMD…LIENYAGNFP (292 aa)) is catalytic. Zn(2+) contacts are provided by C333, H384, and H510.

Belongs to the class-II aminoacyl-tRNA synthetase family. As to quaternary structure, homodimer. It depends on Zn(2+) as a cofactor.

The protein localises to the cytoplasm. The enzyme catalyses tRNA(Thr) + L-threonine + ATP = L-threonyl-tRNA(Thr) + AMP + diphosphate + H(+). In terms of biological role, catalyzes the attachment of threonine to tRNA(Thr) in a two-step reaction: L-threonine is first activated by ATP to form Thr-AMP and then transferred to the acceptor end of tRNA(Thr). Also edits incorrectly charged L-seryl-tRNA(Thr). In Prochlorococcus marinus (strain MIT 9211), this protein is Threonine--tRNA ligase.